The primary structure comprises 559 residues: 2,3-bisphosphoglycerate-independent phosphoglycerate mutase (559 aa).

Aspartate 28 and serine 81 together coordinate Mn(2+). Serine 81 serves as the catalytic Phosphoserine intermediate. Residues histidine 140, 170–171 (RD), arginine 206, arginine 213, 286–289 (RADR), and lysine 361 contribute to the substrate site. Residues aspartate 430, histidine 434, aspartate 471, histidine 472, and histidine 501 each coordinate Mn(2+).

This sequence belongs to the BPG-independent phosphoglycerate mutase family. As to quaternary structure, monomer. Mn(2+) is required as a cofactor. In terms of tissue distribution, found ubiquitously in germinating seed.

It is found in the cytoplasm. It carries out the reaction (2R)-2-phosphoglycerate = (2R)-3-phosphoglycerate. The protein operates within carbohydrate degradation; glycolysis; pyruvate from D-glyceraldehyde 3-phosphate: step 3/5. In terms of biological role, catalyzes the interconversion of 2-phosphoglycerate and 3-phosphoglycerate. The protein is 2,3-bisphosphoglycerate-independent phosphoglycerate mutase of Nicotiana tabacum (Common tobacco).